The following is a 183-amino-acid chain: Putative NAD(P)H nitroreductase YdjA (183 aa).

FMN is bound by residues 10–12 (RRS), Arg-35, and His-39. 121 to 126 (AAVAQG) provides a ligand contact to NAD(+). 131 to 133 (WRS) lines the FMN pocket.

This sequence belongs to the nitroreductase family. In terms of assembly, homodimer. Requires FMN as cofactor.

The sequence is that of Putative NAD(P)H nitroreductase YdjA (ydjA) from Escherichia coli O157:H7.